The sequence spans 422 residues: Platelet-activating factor acetylhydrolase (422 aa).

The first 21 residues, 1–21, serve as a signal peptide directing secretion; it reads MASLWVRARRVFMKSRASGFS. Ser-266 serves as the catalytic Nucleophile. Catalysis depends on Asp-289, which acts as the Charge relay system. Residue Asn-331 is glycosylated (N-linked (GlcNAc...) asparagine). His-345 functions as the Charge relay system in the catalytic mechanism.

This sequence belongs to the AB hydrolase superfamily. Lipase family. In terms of tissue distribution, plasma.

Its subcellular location is the secreted. The protein resides in the extracellular space. It catalyses the reaction a 1-O-alkyl-2-acetyl-sn-glycero-3-phosphocholine + H2O = a 1-O-alkyl-sn-glycero-3-phosphocholine + acetate + H(+). In terms of biological role, modulates the action of platelet-activating factor (PAF) by hydrolyzing the sn-2 ester bond to yield the biologically inactive lyso-PAF. Has a specificity for substrates with a short residue at the sn-2 position. It is inactive against long-chain phospholipids. The protein is Platelet-activating factor acetylhydrolase (PLA2G7) of Gallus gallus (Chicken).